The chain runs to 132 residues: Large ribosomal subunit protein uL14 (132 aa).

Belongs to the universal ribosomal protein uL14 family. In terms of assembly, part of the 50S ribosomal subunit. Forms a cluster with proteins L3 and L24e, part of which may contact the 16S rRNA in 2 intersubunit bridges.

Its function is as follows. Binds to 23S rRNA. Forms part of two intersubunit bridges in the 70S ribosome. This is Large ribosomal subunit protein uL14 from Methanococcus maripaludis (strain DSM 14266 / JCM 13030 / NBRC 101832 / S2 / LL).